Consider the following 216-residue polypeptide: Ethylene-responsive transcription factor ERF016 (216 aa).

Residues 6 to 63 (KYTGVRKRKWGKWVAEIRLPNSRDRIWLGSFDSAEKAARAFDAALYCLRGPGARFNFP) constitute a DNA-binding region (AP2/ERF). The interval 121–145 (EINSGSGGPTLGQVGEDNNNEGNSN) is disordered. Positions 135-145 (GEDNNNEGNSN) are enriched in low complexity.

The protein belongs to the AP2/ERF transcription factor family. ERF subfamily.

The protein resides in the nucleus. Functionally, probably acts as a transcriptional activator. Binds to the GCC-box pathogenesis-related promoter element. May be involved in the regulation of gene expression by stress factors and by components of stress signal transduction pathways. The protein is Ethylene-responsive transcription factor ERF016 (ERF016) of Arabidopsis thaliana (Mouse-ear cress).